The sequence spans 563 residues: MLEFAISAPLDTGAELLSDQVSANFPWLSLSILFPIVGAFLVPFIPDEGEGKQVRWFALGIALVTFVITVAAYLYGYDPSLSGLQLSERVSWLPDLGLTWAVGADGISMPLILLTSFITALAVLAAWPVTFKPKLFFFLILAMDGGQIAVFAVQDMLLFFLAWELELLPVYLLLAIWGGKKRQYAATKFIIYTAGSSLFILLVALAMGFFGGGTPNFEYTNLAQQSFGTGFQLLCYAGLLIAFGVKLPIVPLHTWLPDAHGEATAPVHMLLAGILLKMGGYALMRFNAQLLPEAHAQFAPLLIVLGVVNIIYAALTSFAQRNLKRKIAYSSISHMGFVLIGIGSFSALGTSGAMLQMISHGLIGASLFFLVGATYDRTHTLQLDEMGGVGQKMRIMFALWTVCALASLALPGMSGFVSELMVFVGFATDEAYTLTFRIVIAGLAAIGVILTPIYLLSMLREIFFGKENDQLVSHTNLVDAEPREVYIISCLLVPIIGIGLYPRLMTDSYTASIQELVKRDELALQRIKKPSALMIRNTTMTPAVVSSPRLPISQTRSEQLTRK.

15 consecutive transmembrane segments (helical) span residues 25-45 (FPWL…VPFI), 56-76 (WFAL…YLYG), 90-110 (VSWL…ISMP), 111-131 (LILL…PVTF), 133-153 (PKLF…VFAV), 157-177 (LLFF…LAIW), 189-209 (FIIY…AMGF), 230-250 (GFQL…LPIV), 264-284 (TAPV…YALM), 298-318 (FAPL…LTSF), 335-355 (MGFV…GAML), 356-376 (QMIS…ATYD), 397-417 (FALW…SGFV), 438-458 (IVIA…LLSM), and 485-505 (VYII…PRLM).

This sequence belongs to the complex I subunit 4 family.

It localises to the cellular thylakoid membrane. The catalysed reaction is a plastoquinone + NADH + (n+1) H(+)(in) = a plastoquinol + NAD(+) + n H(+)(out). It catalyses the reaction a plastoquinone + NADPH + (n+1) H(+)(in) = a plastoquinol + NADP(+) + n H(+)(out). In terms of biological role, NDH-1 shuttles electrons from NAD(P)H, via FMN and iron-sulfur (Fe-S) centers, to quinones in the respiratory chain. The immediate electron acceptor for the enzyme in this species is believed to be plastoquinone. Couples the redox reaction to proton translocation (for every two electrons transferred, four hydrogen ions are translocated across the cytoplasmic membrane), and thus conserves the redox energy in a proton gradient. This Prochlorococcus marinus (strain MIT 9303) protein is NAD(P)H-quinone oxidoreductase chain 4.